Reading from the N-terminus, the 156-residue chain is 2-C-methyl-D-erythritol 2,4-cyclodiphosphate synthase (156 aa).

A divalent metal cation is bound by residues D9 and H11. 4-CDP-2-C-methyl-D-erythritol 2-phosphate contacts are provided by residues 9 to 11 and 36 to 37; these read DAH and HS. H44 lines the a divalent metal cation pocket. A 4-CDP-2-C-methyl-D-erythritol 2-phosphate-binding site is contributed by 58–60; that stretch reads NIG.

Belongs to the IspF family. In terms of assembly, homotrimer. It depends on a divalent metal cation as a cofactor.

It carries out the reaction 4-CDP-2-C-methyl-D-erythritol 2-phosphate = 2-C-methyl-D-erythritol 2,4-cyclic diphosphate + CMP. The protein operates within isoprenoid biosynthesis; isopentenyl diphosphate biosynthesis via DXP pathway; isopentenyl diphosphate from 1-deoxy-D-xylulose 5-phosphate: step 4/6. In terms of biological role, involved in the biosynthesis of isopentenyl diphosphate (IPP) and dimethylallyl diphosphate (DMAPP), two major building blocks of isoprenoid compounds. Catalyzes the conversion of 4-diphosphocytidyl-2-C-methyl-D-erythritol 2-phosphate (CDP-ME2P) to 2-C-methyl-D-erythritol 2,4-cyclodiphosphate (ME-CPP) with a corresponding release of cytidine 5-monophosphate (CMP). The chain is 2-C-methyl-D-erythritol 2,4-cyclodiphosphate synthase from Kosmotoga olearia (strain ATCC BAA-1733 / DSM 21960 / TBF 19.5.1).